The sequence spans 320 residues: MLDIDTILAIIISFLIVLIVMPIVIPFLKYLKFGQVVRDDGPKTHHKKSGTPTMGGLVIGLAIIVTSLIFYKKYPAIGAPLIATVAFGLIGFIDDFIKVVLKRSLGLRAREKLVLQFLISITFLYVIQKHLGSDVYLPVINRYIDLKWAYVPVMSVLMVFTVNAVNLTDGLDGLASGVTMIVSLFLAIISIFSKNHDMAIFSGAIVGSCMGFLRYNAHPAVVFMGDTGSLMLGGSIFAIAVMLKQPVLVLVIGGLYIIEAVSVMLQVLYFKLTKKRIFRMAPLHHHFELLGWDEAKVVVVFWIFTILFCLLALAMIQLKI.

Transmembrane regions (helical) follow at residues 7 to 27 (ILAI…VIPF), 50 to 70 (GTPT…SLIF), 77 to 97 (IGAP…DDFI), 113 to 133 (LVLQ…HLGS), 148 to 168 (WAYV…VNLT), 173 to 193 (GLAS…SIFS), 198 to 216 (MAIF…LRYN), 221 to 241 (VVFM…AIAV), 247 to 267 (VLVL…MLQV), and 297 to 317 (VVVV…AMIQ).

It belongs to the glycosyltransferase 4 family. MraY subfamily. It depends on Mg(2+) as a cofactor.

It is found in the cell membrane. It carries out the reaction UDP-N-acetyl-alpha-D-muramoyl-L-alanyl-gamma-D-glutamyl-meso-2,6-diaminopimeloyl-D-alanyl-D-alanine + di-trans,octa-cis-undecaprenyl phosphate = di-trans,octa-cis-undecaprenyl diphospho-N-acetyl-alpha-D-muramoyl-L-alanyl-D-glutamyl-meso-2,6-diaminopimeloyl-D-alanyl-D-alanine + UMP. It functions in the pathway cell wall biogenesis; peptidoglycan biosynthesis. Its function is as follows. Catalyzes the initial step of the lipid cycle reactions in the biosynthesis of the cell wall peptidoglycan: transfers peptidoglycan precursor phospho-MurNAc-pentapeptide from UDP-MurNAc-pentapeptide onto the lipid carrier undecaprenyl phosphate, yielding undecaprenyl-pyrophosphoryl-MurNAc-pentapeptide, known as lipid I. The polypeptide is Phospho-N-acetylmuramoyl-pentapeptide-transferase (Caldicellulosiruptor bescii (strain ATCC BAA-1888 / DSM 6725 / KCTC 15123 / Z-1320) (Anaerocellum thermophilum)).